A 791-amino-acid chain; its full sequence is Phosphoenolpyruvate synthase (791 aa).

Residue Thr-416 is modified to Phosphothreonine. Residue His-418 is the Tele-phosphohistidine intermediate of the active site. Arg-508, Arg-575, Glu-677, Gly-698, Ser-699, Asn-700, and Asp-701 together coordinate substrate. Glu-677 lines the Mg(2+) pocket. Asp-701 serves as a coordination point for Mg(2+). The residue at position 744 (Tyr-744) is a Phosphotyrosine. The active-site Proton donor is the Cys-748.

Belongs to the PEP-utilizing enzyme family. Mg(2+) serves as cofactor.

The enzyme catalyses pyruvate + ATP + H2O = phosphoenolpyruvate + AMP + phosphate + 2 H(+). It functions in the pathway carbohydrate biosynthesis; gluconeogenesis. Catalyzes the phosphorylation of pyruvate to phosphoenolpyruvate. The sequence is that of Phosphoenolpyruvate synthase (ppsA) from Pseudomonas aeruginosa (strain UCBPP-PA14).